The following is a 128-amino-acid chain: Glycine cleavage system H protein (128 aa).

The region spanning 24 to 106 is the Lipoyl-binding domain; that stretch reads VYSVGITEHA…YTDGWLFSIK (83 aa). An N6-lipoyllysine modification is found at lysine 65.

This sequence belongs to the GcvH family. As to quaternary structure, the glycine cleavage system is composed of four proteins: P, T, L and H. It depends on (R)-lipoate as a cofactor.

Its function is as follows. The glycine cleavage system catalyzes the degradation of glycine. The H protein shuttles the methylamine group of glycine from the P protein to the T protein. This is Glycine cleavage system H protein from Yersinia enterocolitica serotype O:8 / biotype 1B (strain NCTC 13174 / 8081).